The chain runs to 929 residues: Protein translocase subunit SecA (929 aa).

Residues glutamine 87, 105 to 109 (GEGKT), and aspartate 512 each bind ATP. Zn(2+) contacts are provided by cysteine 914, cysteine 916, cysteine 925, and histidine 926.

The protein belongs to the SecA family. As to quaternary structure, monomer and homodimer. Part of the essential Sec protein translocation apparatus which comprises SecA, SecYEG and auxiliary proteins SecDF-YajC and YidC. Zn(2+) serves as cofactor.

Its subcellular location is the cell inner membrane. The protein resides in the cytoplasm. It catalyses the reaction ATP + H2O + cellular proteinSide 1 = ADP + phosphate + cellular proteinSide 2.. Its function is as follows. Part of the Sec protein translocase complex. Interacts with the SecYEG preprotein conducting channel. Has a central role in coupling the hydrolysis of ATP to the transfer of proteins into and across the cell membrane, serving both as a receptor for the preprotein-SecB complex and as an ATP-driven molecular motor driving the stepwise translocation of polypeptide chains across the membrane. This is Protein translocase subunit SecA from Psychrobacter arcticus (strain DSM 17307 / VKM B-2377 / 273-4).